The sequence spans 460 residues: Cysteine--tRNA ligase (460 aa).

Cys-28 provides a ligand contact to Zn(2+). The 'HIGH' region signature appears at 30–40 (VTIYDLCHIGH). 3 residues coordinate Zn(2+): Cys-209, His-234, and Glu-238. The short motif at 266–270 (KMSKS) is the 'KMSKS' region element. Residue Lys-269 participates in ATP binding.

The protein belongs to the class-I aminoacyl-tRNA synthetase family. In terms of assembly, monomer. Zn(2+) serves as cofactor.

It localises to the cytoplasm. The enzyme catalyses tRNA(Cys) + L-cysteine + ATP = L-cysteinyl-tRNA(Cys) + AMP + diphosphate. The chain is Cysteine--tRNA ligase from Vibrio vulnificus (strain CMCP6).